Here is a 545-residue protein sequence, read N- to C-terminus: Glucose-6-phosphate isomerase (545 aa).

Glu351 acts as the Proton donor in catalysis. Residues His382 and Lys510 contribute to the active site.

It belongs to the GPI family.

The protein localises to the cytoplasm. The enzyme catalyses alpha-D-glucose 6-phosphate = beta-D-fructose 6-phosphate. Its pathway is carbohydrate biosynthesis; gluconeogenesis. It participates in carbohydrate degradation; glycolysis; D-glyceraldehyde 3-phosphate and glycerone phosphate from D-glucose: step 2/4. Functionally, catalyzes the reversible isomerization of glucose-6-phosphate to fructose-6-phosphate. This Helicobacter pylori (strain ATCC 700392 / 26695) (Campylobacter pylori) protein is Glucose-6-phosphate isomerase.